Reading from the N-terminus, the 256-residue chain is DNA repair protein RecO (256 aa).

The protein belongs to the RecO family.

In terms of biological role, involved in DNA repair and RecF pathway recombination. This Streptococcus pneumoniae (strain Hungary19A-6) protein is DNA repair protein RecO.